A 373-amino-acid chain; its full sequence is Centrosomal protein of 41 kDa (373 aa).

The tract at residues 89-127 (QRLEDNDSATSEPDAEITAKTNGNGSPGEQSPSPVQFIN) is disordered. Phosphoserine is present on residues S96 and S99. Residues 107–127 (AKTNGNGSPGEQSPSPVQFIN) show a composition bias toward polar residues. T109 is modified (phosphothreonine). S114 and S121 each carry phosphoserine. The Rhodanese domain maps to 169–266 (PDCPFLLLDV…LAQKFPEGLI (98 aa)). Disordered stretches follow at residues 275 to 300 (QQAL…ENKW) and 315 to 373 (EEDQ…KPWK). R343 carries the omega-N-methylarginine modification.

Belongs to the CEP41 family. In terms of assembly, found in a complex with TTLL6.

It is found in the cytoplasm. The protein localises to the cytoskeleton. Its subcellular location is the microtubule organizing center. The protein resides in the centrosome. It localises to the cell projection. It is found in the cilium. The protein localises to the cilium basal body. Required during ciliogenesis for tubulin glutamylation in cilium. Probably acts by participating in the transport of TTLL6, a tubulin polyglutamylase, between the basal body and the cilium. This is Centrosomal protein of 41 kDa (CEP41) from Bos taurus (Bovine).